Consider the following 160-residue polypeptide: Peripheral myelin protein 22 (160 aa).

Residue Met1 is a topological domain, cytoplasmic. Residues 2–31 form a helical membrane-spanning segment; that stretch reads LLLLLGILFLHIAVLVLLFVSTIVSQWLVG. Topologically, residues 32–64 are extracellular; the sequence is NGHRTDLWQNCTTSALGAVQHCYSSSVSEWLQS. Residue Asn41 is glycosylated (N-linked (GlcNAc...) asparagine). The chain crosses the membrane as a helical span at residues 65–91; the sequence is VQATMILSVIFSVLSLFLFFCQLFTLT. Topologically, residues 92–95 are cytoplasmic; the sequence is KGGR. The chain crosses the membrane as a helical span at residues 96–119; it reads FYITGVFQILAGLCVMSAAAIYTV. Over 120–133 the chain is Extracellular; sequence RHSEWHVNNDYSYG. A helical membrane pass occupies residues 134 to 156; the sequence is FAYILAWVAFPLALLSGIIYVIL. At 157 to 160 the chain is on the cytoplasmic side; the sequence is RKRE.

The protein belongs to the PMP-22/EMP/MP20 family. Ubiquitinated by the DCX(DCAF13) E3 ubiquitin ligase complex, leading to its degradation. Found exclusively in the peripheral nervous system. Present in both myelinating and nonmyelinating Schwann cells. Found in the tumors of Schwann cell lineage where axons are present (neurofibromas) but not where axons are absent (schwannomas).

The protein resides in the cell membrane. In terms of biological role, might be involved in growth regulation, and in myelinization in the peripheral nervous system. The sequence is that of Peripheral myelin protein 22 (Pmp22) from Rattus norvegicus (Rat).